The primary structure comprises 88 residues: Long neurotoxin LNTX-1 (88 aa).

The signal sequence occupies residues 1-21 (MKTLLLTLVVVTIVCLDFGYA). 5 disulfide bridges follow: cysteine 24/cysteine 42, cysteine 35/cysteine 63, cysteine 48/cysteine 52, cysteine 67/cysteine 78, and cysteine 79/cysteine 84.

It belongs to the three-finger toxin family. Long-chain subfamily. Type II alpha-neurotoxin sub-subfamily. As to expression, expressed by the venom gland.

The protein resides in the secreted. Its function is as follows. Binds with high affinity to muscular (alpha-1/CHRNA1) and neuronal (alpha-7/CHRNA7) nicotinic acetylcholine receptor (nAChR) and inhibits acetylcholine from binding to the receptor, thereby impairing neuromuscular and neuronal transmission. This chain is Long neurotoxin LNTX-1, found in Demansia vestigiata (Lesser black whip snake).